Consider the following 926-residue polypeptide: MTDSKDDKTLSVTGKKTLTLKPTGVNQGTVRQDMGRGRTKAVVVETRKRRPTRPEDERAGQPQGRVGDDAPATAAAAPVQTPAPVQAPAPVAAAPQAPRPAAPAQRVQQTNQYSQQRHPGQQNRPQASSQPSRQPDRPRGAVLHDLSASEMDARRRALAEAQVREVEDAKRRAEEEVRRQAEEVERQRLAALEAIRQAEEDKARALEAKNAPEPVAEPVAPVAETPRAADPAPRAPSPAGAKPAAGAPAPSFVRGRKPEGEDDENRGPARGGPVRGKVVRPEPAKVPARPKTEDERRRGKLTVTTAAVDEDGNARGRSLSAMRRRQEKFRRSQMQEPREKVMREVVLPETITIQELSQRMSERAVDVIKYLMKEGQMMKPGDVIDADLAELIATEFGHTVKRVSESDVEEGIFDVKDDAGEMVSRPPVVTIMGHVDHGKTSLLDAIRQTSVVSGEAGGITQHIGAYQVEQNGHKITFIDTPGHAAFTAMRARGAQATDIAILVVAADDSVMPQTIESIHHAKAANVPIIVAINKIDKHEANPEKVRQQLLQHEVFVESMGGEVLDVEVSAKNKLNLDKLLEAVLLQAEILDLKADPSRTAEGLVIEAQLDRGRGSVATVLVQKGTLRPGQIIVAGDQWGRVRALVNDKGGHVKEAGPAMPVEVLGLSGTPAAGDKFAVVESEARAREISEYRQRLARDKAAARQSGQRGSLEQMMSKLQDTGFKEFPLVIKADVQGSVEAIVAALDKLGTDEVRARIVHSGAGAITESDISLAEASNAAIIGFNVRANVQARAASERTGTEIRYYNIIYDLVDDVKAAMSGLLSPERRETFLGNAEILEVFNITKTGKVAGCRVVEGKVERGAGVRLVRDNVVIHEGKLKTLKRFKDEVADVPMGQECGMAFENYEDIRAGDTIECFRVEHITRTL.

Disordered stretches follow at residues 1–185 (MTDS…EEVE) and 200–299 (EDKA…RRRG). Low complexity-rich tracts occupy residues 13–24 (TGKKTLTLKPTG) and 70–96 (APATAAAAPVQTPAPVQAPAPVAAAPQ). The span at 110 to 133 (TNQYSQQRHPGQQNRPQASSQPSR) shows a compositional bias: polar residues. Residues 151–185 (MDARRRALAEAQVREVEDAKRRAEEEVRRQAEEVE) show a composition bias toward basic and acidic residues. Over residues 211 to 251 (APEPVAEPVAPVAETPRAADPAPRAPSPAGAKPAAGAPAPS) the composition is skewed to low complexity. Positions 424–591 (SRPPVVTIMG…AVLLQAEILD (168 aa)) constitute a tr-type G domain. Residues 433–440 (GHVDHGKT) are G1. 433-440 (GHVDHGKT) contributes to the GTP binding site. The interval 458 to 462 (GITQH) is G2. The segment at 479–482 (DTPG) is G3. Residues 479-483 (DTPGH) and 533-536 (NKID) each bind GTP. The interval 533–536 (NKID) is G4. Residues 569–571 (SAK) form a G5 region.

This sequence belongs to the TRAFAC class translation factor GTPase superfamily. Classic translation factor GTPase family. IF-2 subfamily.

It is found in the cytoplasm. Functionally, one of the essential components for the initiation of protein synthesis. Protects formylmethionyl-tRNA from spontaneous hydrolysis and promotes its binding to the 30S ribosomal subunits. Also involved in the hydrolysis of GTP during the formation of the 70S ribosomal complex. The polypeptide is Translation initiation factor IF-2 (Allorhizobium ampelinum (strain ATCC BAA-846 / DSM 112012 / S4) (Agrobacterium vitis (strain S4))).